A 378-amino-acid polypeptide reads, in one-letter code: Queuine tRNA-ribosyltransferase (378 aa).

The Proton acceptor role is filled by Asp-90. Substrate is bound by residues 90 to 94, Asp-152, Gln-194, and Gly-223; that span reads DSGGY. The tract at residues 254-260 is RNA binding; it reads GVGKPED. Asp-273 functions as the Nucleophile in the catalytic mechanism. The RNA binding; important for wobble base 34 recognition stretch occupies residues 278–282; it reads TRNAR. The Zn(2+) site is built by Cys-311, Cys-313, Cys-316, and His-342.

This sequence belongs to the queuine tRNA-ribosyltransferase family. Homodimer. Within each dimer, one monomer is responsible for RNA recognition and catalysis, while the other monomer binds to the replacement base PreQ1. It depends on Zn(2+) as a cofactor.

It carries out the reaction 7-aminomethyl-7-carbaguanine + guanosine(34) in tRNA = 7-aminomethyl-7-carbaguanosine(34) in tRNA + guanine. It participates in tRNA modification; tRNA-queuosine biosynthesis. Functionally, catalyzes the base-exchange of a guanine (G) residue with the queuine precursor 7-aminomethyl-7-deazaguanine (PreQ1) at position 34 (anticodon wobble position) in tRNAs with GU(N) anticodons (tRNA-Asp, -Asn, -His and -Tyr). Catalysis occurs through a double-displacement mechanism. The nucleophile active site attacks the C1' of nucleotide 34 to detach the guanine base from the RNA, forming a covalent enzyme-RNA intermediate. The proton acceptor active site deprotonates the incoming PreQ1, allowing a nucleophilic attack on the C1' of the ribose to form the product. After dissociation, two additional enzymatic reactions on the tRNA convert PreQ1 to queuine (Q), resulting in the hypermodified nucleoside queuosine (7-(((4,5-cis-dihydroxy-2-cyclopenten-1-yl)amino)methyl)-7-deazaguanosine). The chain is Queuine tRNA-ribosyltransferase from Aquifex aeolicus (strain VF5).